The chain runs to 74 residues: MARPFFRRRKTCPFSAKDAPVIDYKDVRLLQGYLSERGKIVPSRITAVSTKKQRELAKAIKRARHIGLLPYIVK.

It belongs to the bacterial ribosomal protein bS18 family. As to quaternary structure, part of the 30S ribosomal subunit. Forms a tight heterodimer with protein bS6.

Functionally, binds as a heterodimer with protein bS6 to the central domain of the 16S rRNA, where it helps stabilize the platform of the 30S subunit. This Sphingopyxis alaskensis (strain DSM 13593 / LMG 18877 / RB2256) (Sphingomonas alaskensis) protein is Small ribosomal subunit protein bS18.